The sequence spans 515 residues: Maturase K (515 aa).

Belongs to the intron maturase 2 family. MatK subfamily.

It localises to the plastid. The protein localises to the chloroplast. In terms of biological role, usually encoded in the trnK tRNA gene intron. Probably assists in splicing its own and other chloroplast group II introns. The sequence is that of Maturase K from Pinus halepensis (Aleppo pine).